The sequence spans 1096 residues: Serine/threonine-protein kinase mig-15 (1096 aa).

In terms of domain architecture, Protein kinase spans 21–288 (FELIEVVGNG…TGALLRHPFI (268 aa)). Residues 27-35 (VGNGTYGQV) and Lys-50 each bind ATP. Asp-151 functions as the Proton acceptor in the catalytic mechanism. A compositionally biased stretch (basic and acidic residues) spans 293–315 (HEQTIRHSIKEHIDRNRRVKKDD). Disordered stretches follow at residues 293–351 (HEQT…MIPM), 380–492 (LPQQ…QQSR), 517–545 (KMGG…EASI), and 574–664 (NGEG…DLLP). The segment covering 316-328 (ADYEYSGSEDDEP) has biased composition (acidic residues). Low complexity predominate over residues 380-393 (LPQQPAPAPFQYQQ). Basic and acidic residues-rich tracts occupy residues 397–408 (VEPRRESSEVKL) and 453–472 (NYEK…ERQA). Residues 532–541 (SPPPPAPPPR) are compositionally biased toward pro residues. The segment covering 629–642 (LDDDDSDSDNEEGN) has biased composition (acidic residues). Residues 778–1070 (SGEILCAALW…KFLCERNDKV (293 aa)) enclose the CNH domain.

Belongs to the protein kinase superfamily. STE Ser/Thr protein kinase family. STE20 subfamily.

The catalysed reaction is L-seryl-[protein] + ATP = O-phospho-L-seryl-[protein] + ADP + H(+). It catalyses the reaction L-threonyl-[protein] + ATP = O-phospho-L-threonyl-[protein] + ADP + H(+). Functionally, involved in cell migration and signal transduction. Important in several developmental processes including epidermal development, Q neuroblast migrations and muscle arm targeting. Required with ina-1/pat-3 to stabilize the commissural axons growth cone along a precise direction and are required for the cell to respond appropriately when signaling in the growth cone must change. During gonad morphogenesis, involved in distal tip cell (DTC) migration from the dorsal side of the hermaphrodite body to the midbody to allow for formation of gonad arms. This chain is Serine/threonine-protein kinase mig-15 (mig-15), found in Caenorhabditis elegans.